Here is a 258-residue protein sequence, read N- to C-terminus: UPF0246 protein Shew_1093 (258 aa).

The protein belongs to the UPF0246 family.

This Shewanella loihica (strain ATCC BAA-1088 / PV-4) protein is UPF0246 protein Shew_1093.